The sequence spans 267 residues: Thiamine pyrophosphokinase 2 (267 aa).

The protein belongs to the thiamine pyrophosphokinase family.

The protein localises to the cytoplasm. Its subcellular location is the cytosol. It catalyses the reaction thiamine + ATP = thiamine diphosphate + AMP + H(+). Its pathway is cofactor biosynthesis; thiamine diphosphate biosynthesis; thiamine diphosphate from thiamine: step 1/1. Its function is as follows. Catalyzes the phosphorylation of thiamine to thiamine pyrophosphate (TPP). TPP is an active cofactor for enzymes involved in glycolysis and energy production. Plant leaves require high levels of TPP for photosynthesis and carbohydrate metabolism. The protein is Thiamine pyrophosphokinase 2 (TPK2) of Oryza sativa subsp. japonica (Rice).